Here is a 90-residue protein sequence, read N- to C-terminus: Probable Fe(2+)-trafficking protein (90 aa).

The protein belongs to the Fe(2+)-trafficking protein family.

Its function is as follows. Could be a mediator in iron transactions between iron acquisition and iron-requiring processes, such as synthesis and/or repair of Fe-S clusters in biosynthetic enzymes. This Nitrosococcus oceani (strain ATCC 19707 / BCRC 17464 / JCM 30415 / NCIMB 11848 / C-107) protein is Probable Fe(2+)-trafficking protein.